The sequence spans 515 residues: MVAKPRSRCCCCSVFIGVIILIAIIIAVIFTIRHRSNHSDDDGSNVKNYANALKIAMQFFDIQKSGKLENNEISWRGDSGLKDGSEASIDLSKGLYDAGDHMKFGFPMAFTATVLSWSILEYGDQMASLNLLDHAKDSLKWTTDFLINAHPSPNVLYIQVGDPVTDHKCWDRPETMTRKRTLTKIDTKTPGTEVAAETAAAMAAASLVFKESDTKYSSTLLKHAKQLFDFADNNRGSYSVNIPEVQSYYNSTGYGDELLWAASWLYHATEDQTYLDFVSENGEEFGNFGSPSWFSWDNKLPGTHILLSRLTFFKKGLSGSKGLQGFKETAEAVMCGLIPSSPTATSSRTDGGLIWVSEWNALQHPVSSAFLATLYSDYMLTSGVKELSCSDQSFKPSDLRKFARSQADYMLGKNPEKMSYLVGYGEKYPEFVHHRGASIPADATTGCKDGFKWLNSDEPNPNVAYGALVGGPFLNDTFIDARNNSMQNEPSTYNSALVVGLLSSLVTTSSSVESF.

The first 31 residues, 1–31 (MVAKPRSRCCCCSVFIGVIILIAIIIAVIFT), serve as a signal peptide directing secretion. N-linked (GlcNAc...) asparagine glycosylation is present at Asn-37. Asp-100 serves as the catalytic Nucleophile. N-linked (GlcNAc...) asparagine glycosylation is present at Asn-250. His-433 is an active-site residue. Residue Asn-475 is glycosylated (N-linked (GlcNAc...) asparagine). The active site involves Asp-480. Asn-483 carries an N-linked (GlcNAc...) asparagine glycan. The active site involves Glu-489.

Belongs to the glycosyl hydrolase 9 (cellulase E) family.

Its subcellular location is the secreted. The enzyme catalyses Endohydrolysis of (1-&gt;4)-beta-D-glucosidic linkages in cellulose, lichenin and cereal beta-D-glucans.. This Arabidopsis thaliana (Mouse-ear cress) protein is Endoglucanase 2.